Consider the following 181-residue polypeptide: UPF0177 protein YbdI (181 aa).

5 helical membrane passes run 10–30, 41–61, 81–101, 114–134, and 161–181; these read ILFL…GVFA, LLWL…AHYL, FVDS…IAPI, FFSH…LIHT, and SDSI…HIII.

This sequence belongs to the UPF0177 family.

The protein localises to the cell membrane. The chain is UPF0177 protein YbdI (ybdI) from Lactococcus lactis subsp. lactis (strain IL1403) (Streptococcus lactis).